A 310-amino-acid chain; its full sequence is Ribosomal RNA small subunit methyltransferase H (310 aa).

S-adenosyl-L-methionine is bound by residues 32 to 34 (GGH), aspartate 52, phenylalanine 79, aspartate 100, and glutamine 107.

It belongs to the methyltransferase superfamily. RsmH family.

The protein localises to the cytoplasm. The enzyme catalyses cytidine(1402) in 16S rRNA + S-adenosyl-L-methionine = N(4)-methylcytidine(1402) in 16S rRNA + S-adenosyl-L-homocysteine + H(+). Its function is as follows. Specifically methylates the N4 position of cytidine in position 1402 (C1402) of 16S rRNA. The protein is Ribosomal RNA small subunit methyltransferase H of Bacillus cytotoxicus (strain DSM 22905 / CIP 110041 / 391-98 / NVH 391-98).